The primary structure comprises 274 residues: 2,3,4,5-tetrahydropyridine-2,6-dicarboxylate N-succinyltransferase (274 aa).

2 residues coordinate substrate: Arg-104 and Asp-141.

Belongs to the transferase hexapeptide repeat family. Homotrimer.

The protein localises to the cytoplasm. The catalysed reaction is (S)-2,3,4,5-tetrahydrodipicolinate + succinyl-CoA + H2O = (S)-2-succinylamino-6-oxoheptanedioate + CoA. It functions in the pathway amino-acid biosynthesis; L-lysine biosynthesis via DAP pathway; LL-2,6-diaminopimelate from (S)-tetrahydrodipicolinate (succinylase route): step 1/3. The sequence is that of 2,3,4,5-tetrahydropyridine-2,6-dicarboxylate N-succinyltransferase from Wigglesworthia glossinidia brevipalpis.